The sequence spans 112 residues: UPF0122 protein CPE1714 (112 aa).

This sequence belongs to the UPF0122 family.

In terms of biological role, might take part in the signal recognition particle (SRP) pathway. This is inferred from the conservation of its genetic proximity to ftsY/ffh. May be a regulatory protein. The protein is UPF0122 protein CPE1714 of Clostridium perfringens (strain 13 / Type A).